The primary structure comprises 201 residues: Potassium-transporting ATPase KdpC subunit (201 aa).

The helical transmembrane segment at 7–29 (PALVLLTALTAITGLAYPLAMTG) threads the bilayer.

Belongs to the KdpC family. In terms of assembly, the system is composed of three essential subunits: KdpA, KdpB and KdpC.

It is found in the cell inner membrane. Part of the high-affinity ATP-driven potassium transport (or Kdp) system, which catalyzes the hydrolysis of ATP coupled with the electrogenic transport of potassium into the cytoplasm. This subunit acts as a catalytic chaperone that increases the ATP-binding affinity of the ATP-hydrolyzing subunit KdpB by the formation of a transient KdpB/KdpC/ATP ternary complex. This is Potassium-transporting ATPase KdpC subunit from Methylorubrum populi (strain ATCC BAA-705 / NCIMB 13946 / BJ001) (Methylobacterium populi).